A 244-amino-acid chain; its full sequence is Small ribosomal subunit protein eS4 (244 aa).

The S4 RNA-binding domain maps to 43–106 (LPLLLVVRDV…DENYLVLFDE (64 aa)).

This sequence belongs to the eukaryotic ribosomal protein eS4 family.

This is Small ribosomal subunit protein eS4 from Methanococcus maripaludis (strain C5 / ATCC BAA-1333).